The chain runs to 316 residues: uncharacterized protein (316 aa).

BNR repeat units lie at residues Phe62–Pro73, Lys124–Asn135, Phe196–Val207, and Tyr242–Gln253.

This is an uncharacterized protein from Saccharomyces cerevisiae (strain ATCC 204508 / S288c) (Baker's yeast).